The primary structure comprises 711 residues: MDVSSLAAAAPSLVAPPLHHKPHLAFPPHHPSPARGSIGVRCAHSPSPHPLRPSAATADEEVSLPPSLRVSRLAEEFRVSPDAADRARRLLARAAALPRLGEADRVAANRVMGCVAQVWLVGRCDGAGRMRFAADSDSELSRGYCACLVSALDGARPEEVLDVDPADLAPLGGAAAGTGARSRASTWHNVLIGMQKRARAAIAAREGRPAGEPFPSLIIGRDGAIRAQGTYAEAQAMFLSPNESKTSELVKSLREKKIGIVAHFYMDPEVQGILTASKKHWPHIHISDSLVMADSAVKMAEAGCEYITVLGVDFMSENVRAILDQAGYSKVGVYRMSSDQIGCSLADAASSSAYTHFLKEASRSPPSLHVIYINTSLETKAHAHELVPTITCTSSNVVATILQAFAQIPGLNVWYGPDSYMGANIADLFQRMAVMSDEEIAEVHPSHNKKSINALLPRLHYYQDGNCIVHDMFGHEVVDKIKEQYCDAFLTAHFEVPGEMFSLSMEAKTRGMGVVGSTQNILDFIKNHLMEALDRNIDDHLQFVLGTESGMITSIVAAVRELFDSYKTSQQSANIEVEIVFPVSSDAVSNTSVNGSHHLDSSTVTDLDNVSVVPGVSSGEGCSIHGGCASCPYMKMNSLRSLLKVCHQLPDRDNRLVAYQASRFNAKTPLGKLVAEVGCEPILHMRHFQATKRLPDKLVHHVIHGKGEPTS.

The transit peptide at 1-41 directs the protein to the chloroplast; it reads MDVSSLAAAAPSLVAPPLHHKPHLAFPPHHPSPARGSIGVR. Residues 17–63 are disordered; it reads PLHHKPHLAFPPHHPSPARGSIGVRCAHSPSPHPLRPSAATADEEVS. Cys114 (cysteine persulfide intermediate) is an active-site residue. Iminosuccinate-binding residues include His263 and Ser289. Residue Cys343 participates in [4Fe-4S] cluster binding. Residues 372–374 and Ser394 contribute to the iminosuccinate site; that span reads YIN. Residue Cys467 participates in [4Fe-4S] cluster binding. Residues 493–495 and Thr518 each bind iminosuccinate; that span reads HFE. Residue Cys631 coordinates [4Fe-4S] cluster.

It belongs to the quinolinate synthase family. Type 1 subfamily. In terms of assembly, homodimer. [4Fe-4S] cluster is required as a cofactor.

It is found in the plastid. Its subcellular location is the chloroplast. It catalyses the reaction iminosuccinate + dihydroxyacetone phosphate = quinolinate + phosphate + 2 H2O + H(+). Its pathway is cofactor biosynthesis; NAD(+) biosynthesis; quinolinate from iminoaspartate: step 1/1. Catalyzes the condensation of iminoaspartate with dihydroxyacetone phosphate to form quinolinate. This is Quinolinate synthase, chloroplastic from Oryza sativa subsp. japonica (Rice).